The chain runs to 311 residues: Arginine/serine-rich protein 1 (311 aa).

The disordered stretch occupies residues 1 to 125 (MSTYVNDMWP…RSRSRSRGRS (125 aa)). S12 carries the post-translational modification Phosphoserine. Over residues 20-31 (STSRSGGSSRLS) the composition is skewed to low complexity. Positions 32–123 (SRSRSRSFSR…RSRSRSRSRG (92 aa)) are enriched in basic residues. Phosphoserine is present on residues S109 and S111. An Omega-N-methylarginine modification is found at R135.

The protein belongs to the RSRP family. In terms of processing, phosphorylated. Phosphorylation at Ser-109 and Ser-111 mediates the interaction with spliceosome proteins.

Its subcellular location is the nucleus. Functionally, probably acts as a spliceosomal factor that contributes to spliceosome assembly and regulates the isoform switching of proteins such as PARP6. The sequence is that of Arginine/serine-rich protein 1 (RSRP1) from Pongo abelii (Sumatran orangutan).